A 328-amino-acid polypeptide reads, in one-letter code: C-type lectin domain family 11 member A (328 aa).

An N-terminal signal peptide occupies residues 1–21 (MQAAWLLGALLVPHLLSFGHG). A disordered region spans residues 58–111 (PTGVGNKDNLAENSEGKEVWEATETQGEEEEEETTTTPSSSPTPFPSPSPTSED). Residues 188-325 (LGHKCFLLSR…CERRLYFVCE (138 aa)) form the C-type lectin domain. Disulfide bonds link C209–C324 and C301–C316.

O-glycosylated. Probably sulfated on the O-glycans.

It localises to the cytoplasm. Its subcellular location is the secreted. Its function is as follows. Promotes osteogenesis by stimulating the differentiation of mesenchymal progenitors into mature osteoblasts. Important for repair and maintenance of adult bone. This is C-type lectin domain family 11 member A (Clec11a) from Rattus norvegicus (Rat).